Reading from the N-terminus, the 138-residue chain is Large ribosomal subunit protein bL17 (138 aa).

The protein belongs to the bacterial ribosomal protein bL17 family. As to quaternary structure, part of the 50S ribosomal subunit. Contacts protein L32.

This Methylorubrum extorquens (strain PA1) (Methylobacterium extorquens) protein is Large ribosomal subunit protein bL17.